A 192-amino-acid polypeptide reads, in one-letter code: Ciliary microtubule inner protein 3 (192 aa).

The disordered stretch occupies residues 24–108 (RAGAEGGPSL…SGQKVKAPHR (85 aa)). The span at 55–64 (APRRPPRPRT) shows a compositional bias: basic residues.

This sequence belongs to the CIMIP3-like family. As to expression, detected in the sperm flagellum (at protein level).

The protein resides in the cytoplasm. Its subcellular location is the cytoskeleton. It is found in the flagellum axoneme. This Bos taurus (Bovine) protein is Ciliary microtubule inner protein 3.